A 1841-amino-acid chain; its full sequence is Cell division control protein 12 (1841 aa).

2 stretches are compositionally biased toward polar residues: residues 1-25 (MRNS…TPSA) and 46-63 (SIES…QSVT). Disordered regions lie at residues 1–63 (MRNS…QSVT), 78–134 (NSHN…GPRL), and 152–181 (PPVH…RTKH). A GBD/FH3 domain is found at 232–620 (TRPPSLDQLI…RILLNSKVSN (389 aa)). The stretch at 674-715 (LGAEDLIAKLNKEVEDQKDVILSQKRTNETLKTEIDALQKSH) forms a coiled coil. Residues 740–972 (GSTNSKERII…VSPAVSNNIS (233 aa)) enclose the FH1 domain. The FH2 domain occupies 980–1391 (TGLTRRPTRR…QHRRLNLVNN (412 aa)). Positions 1260–1290 (TEAAKLNIEAIEQECSELIRGCQNLQIDCDS) form a coiled coil. 3 disordered regions span residues 1445–1661 (EAPN…ENNL), 1696–1715 (TTTT…INTI), and 1735–1758 (KSNK…GSNK). 2 stretches are compositionally biased toward polar residues: residues 1447-1456 (PNTSTKSSPA) and 1483-1497 (SEST…NITP). Positions 1499–1516 (KKGEVSSKAKKGYNYEKR) are enriched in basic and acidic residues. Positions 1539-1553 (GRSASYTFSDPSSLE) are enriched in polar residues. Ser-1541 carries the post-translational modification Phosphoserine. Phosphotyrosine is present on Tyr-1544. A compositionally biased stretch (basic and acidic residues) spans 1554–1567 (DSNRQKPFNGEKFR). Basic residues predominate over residues 1568–1577 (RFSSKSRRGS). Residues 1594–1604 (INNNQTSPQNK) are compositionally biased toward polar residues. The segment covering 1605-1621 (PSKESLKSDTISNEKKV) has biased composition (basic and acidic residues). Residues 1630 to 1641 (NLLTPTISNGTR) show a composition bias toward polar residues.

This sequence belongs to the formin homology family. BNI1 subfamily. Interacts with profilin and actin at the FH1 and FH2 domains respectively.

The protein resides in the nucleus. Functionally, plays a role in the cell cycle. Involved in cytokinesis. Component of the cell division ring. In the absence of profilin, caps the barbed end of actin filaments, thus preventing subunit addition and dissociation. In the presence of profilin, nucleates actin filaments that grow rapidly from their barbed ends. The protein is Cell division control protein 12 (cdc12) of Schizosaccharomyces pombe (strain 972 / ATCC 24843) (Fission yeast).